A 721-amino-acid polypeptide reads, in one-letter code: Kinesin-like protein KIF2C (721 aa).

The tract at residues 1-250 (MESLHARLFP…CSPLTVTDPI (250 aa)) is globular. Phosphoserine occurs at positions 3 and 19. At Ser-92 the chain carries Phosphoserine; by AURKB. Positions 95–98 (SKIP) match the Microtubule tip localization signal motif. A phosphoserine mark is found at Ser-106, Ser-108, Ser-112, Ser-162, Ser-171, Ser-183, and Ser-188. Residues 164–188 (EAEEQAHSTRSTSSANPGNSVRRKS) form a disordered region. Over residues 171 to 182 (STRSTSSANPGN) the composition is skewed to polar residues. Residues 203 to 234 (EKRAQNSELRIKRAQEYDSSFPNWEFARMIKE) form a negative regulator of microtubule-binding region. One can recognise a Kinesin motor domain in the interval 254–584 (RICVCVRKRP…LRYADRVKEL (331 aa)). Residues Arg-260 and 344 to 351 (GQTGSGKT) contribute to the ATP site. Phosphoserine occurs at positions 515 and 626. Residues 614–652 (GNEEEELSSQMSSFNEAMTQIRELEERALEELREIIQQG) adopt a coiled-coil conformation.

The protein belongs to the TRAFAC class myosin-kinesin ATPase superfamily. Kinesin family. MCAK/KIF2 subfamily. As to quaternary structure, interacts with CENPH. Interacts with MTUS2/TIP150; the interaction is direct. Interacts with MAPRE1; the interaction is direct, regulated by phosphorylation and is probably required for targeting to growing microtubule plus ends. Interacts with KIF18B at microtubule tips; this interaction increases the affinity of both partners for microtubule plus ends and is required for robust microtubule depolymerization. Phosphorylation by AURKA or AURKB strongly reduces KIF18B-binding. Post-translationally, phosphorylation by AURKB, regulates association with centromeres and kinetochores and the microtubule depolymerization activity. In terms of processing, ubiquitinated.

It is found in the cytoplasm. It localises to the cytoskeleton. The protein localises to the nucleus. The protein resides in the chromosome. Its subcellular location is the centromere. It is found in the kinetochore. In complex with KIF18B, constitutes the major microtubule plus-end depolymerizing activity in mitotic cells. Regulates the turnover of microtubules at the kinetochore and functions in chromosome segregation during mitosis. Plays a role in chromosome congression and is required for the lateral to end-on conversion of the chromosome-microtubule attachment. This chain is Kinesin-like protein KIF2C (Kif2c), found in Mus musculus (Mouse).